The chain runs to 470 residues: ATP synthase subunit beta (470 aa).

An ATP-binding site is contributed by 157-164 (GGAGVGKT).

The protein belongs to the ATPase alpha/beta chains family. F-type ATPases have 2 components, CF(1) - the catalytic core - and CF(0) - the membrane proton channel. CF(1) has five subunits: alpha(3), beta(3), gamma(1), delta(1), epsilon(1). CF(0) has three main subunits: a(1), b(2) and c(9-12). The alpha and beta chains form an alternating ring which encloses part of the gamma chain. CF(1) is attached to CF(0) by a central stalk formed by the gamma and epsilon chains, while a peripheral stalk is formed by the delta and b chains.

Its subcellular location is the cell membrane. The enzyme catalyses ATP + H2O + 4 H(+)(in) = ADP + phosphate + 5 H(+)(out). Functionally, produces ATP from ADP in the presence of a proton gradient across the membrane. The catalytic sites are hosted primarily by the beta subunits. This Pelotomaculum thermopropionicum (strain DSM 13744 / JCM 10971 / SI) protein is ATP synthase subunit beta.